Consider the following 449-residue polypeptide: Ribulose bisphosphate carboxylase large chain (449 aa).

Lysine 5 bears the N6,N6,N6-trimethyllysine mark. Residues asparagine 114 and threonine 164 each coordinate substrate. Residue lysine 166 is the Proton acceptor of the active site. Lysine 168 serves as a coordination point for substrate. Mg(2+) contacts are provided by lysine 192, aspartate 194, and glutamate 195. An N6-carboxylysine modification is found at lysine 192. Catalysis depends on histidine 285, which acts as the Proton acceptor. Substrate-binding residues include arginine 286, histidine 318, and serine 370.

Belongs to the RuBisCO large chain family. Type I subfamily. Heterohexadecamer of 8 large chains and 8 small chains; disulfide-linked. The disulfide link is formed within the large subunit homodimers. Requires Mg(2+) as cofactor. In terms of processing, the disulfide bond which can form in the large chain dimeric partners within the hexadecamer appears to be associated with oxidative stress and protein turnover.

It is found in the plastid. The protein resides in the chloroplast. It carries out the reaction 2 (2R)-3-phosphoglycerate + 2 H(+) = D-ribulose 1,5-bisphosphate + CO2 + H2O. It catalyses the reaction D-ribulose 1,5-bisphosphate + O2 = 2-phosphoglycolate + (2R)-3-phosphoglycerate + 2 H(+). RuBisCO catalyzes two reactions: the carboxylation of D-ribulose 1,5-bisphosphate, the primary event in carbon dioxide fixation, as well as the oxidative fragmentation of the pentose substrate in the photorespiration process. Both reactions occur simultaneously and in competition at the same active site. This is Ribulose bisphosphate carboxylase large chain from Zamioculcas zamiifolia (Aroid palm).